A 269-amino-acid chain; its full sequence is Shikimate dehydrogenase (NADP(+)) (269 aa).

Shikimate-binding positions include 17 to 19 (SKS) and T64. Catalysis depends on K68, which acts as the Proton acceptor. E80 lines the NADP(+) pocket. The shikimate site is built by N89 and D105. Residues 130–134 (GAGGA), 154–159 (NRTHAK), and M213 each bind NADP(+). Y215 lines the shikimate pocket. G237 is a binding site for NADP(+).

It belongs to the shikimate dehydrogenase family. As to quaternary structure, homodimer.

It carries out the reaction shikimate + NADP(+) = 3-dehydroshikimate + NADPH + H(+). It functions in the pathway metabolic intermediate biosynthesis; chorismate biosynthesis; chorismate from D-erythrose 4-phosphate and phosphoenolpyruvate: step 4/7. Its function is as follows. Involved in the biosynthesis of the chorismate, which leads to the biosynthesis of aromatic amino acids. Catalyzes the reversible NADPH linked reduction of 3-dehydroshikimate (DHSA) to yield shikimate (SA). In Neisseria flavescens, this protein is Shikimate dehydrogenase (NADP(+)).